Here is a 194-residue protein sequence, read N- to C-terminus: Lymphocyte antigen 6 complex locus protein G5b (194 aa).

A signal peptide spans 1 to 18 (MRARVLVGMLTMVGFAMG). The UPAR/Ly6 domain maps to 26–118 (RTCHLCLLED…SAQHQSTLRG (93 aa)). 5 disulfide bridges follow: C28–C55, C31–C40, C47–C73, C81–C98, and C99–C104. N63 is a glycosylation site (N-linked (GlcNAc...) asparagine). N141 carries N-linked (GlcNAc...) asparagine glycosylation.

As to quaternary structure, monomer. Post-translationally, N-glycosylated.

It is found in the secreted. In Mus musculus (Mouse), this protein is Lymphocyte antigen 6 complex locus protein G5b (Ly6g5b).